The following is a 277-amino-acid chain: MAALVEFISDRVLSSCKSACKEDPKLRSYISALRERMDKLMEIKRSPFERESRDTDFGGNNKYAGTLEKLNKVKALGDLFGDEFTTQYKAIYDEHQMLLNKSHHMQLEHEKKHKNDKKSKRLGYIFFAAALLSVLALWIYLGAVSLVVAAKVVIEVATPSIAPLWKWVTEILEDSESEIAYKKLTDLFRSMDKNANLNIEFAKTFKSLVETLLTRIKPILETVDYAVEQREEETVKLVSKKSLRILKVLLTKSRKLVQMWLGVAKWSLREELMFWNT.

2 consecutive transmembrane segments (helical) span residues 124-144 and 145-165; these read YIFF…LGAV and SLVV…APLW.

Belongs to the UPF0496 family.

It is found in the membrane. In Arabidopsis thaliana (Mouse-ear cress), this protein is UPF0496 protein At3g48650.